A 713-amino-acid polypeptide reads, in one-letter code: Cadherin-13 (713 aa).

A signal peptide spans 1–22 (MQPATPLVLCVLLSQVLLLTSA). Residues 23 to 138 (EDLDCTPGFQ…RTSPVPRQKR (116 aa)) constitute a propeptide that is removed on maturation. 2 N-linked (GlcNAc...) asparagine glycosylation sites follow: N52 and N86. Cadherin domains are found at residues 139 to 245 (SIVV…RPIF), 246 to 363 (REGP…SPKF), 364 to 477 (TKKE…SPVF), 478 to 585 (YPDP…APFI), and 584 to 694 (FIYP…AAGA). The disordered stretch occupies residues 156–178 (PRDVGKVVDSDRPEGSKFRLTGK). The span at 158-172 (DVGKVVDSDRPEGSK) shows a compositional bias: basic and acidic residues. Residues N382, N489, N500, N530, N598, N638, and N671 are each glycosylated (N-linked (GlcNAc...) asparagine). G693 carries GPI-anchor amidated glycine lipidation. Residues 694–713 (APHFSAATALLLSLFSLARL) constitute a propeptide, removed in mature form.

By contrast to classical cadherins, homodimerization in trans is not mediated by cadherin EC1 domain strand-swapping, but instead through a homophilic adhesive interface which joins two elongated EC1-EC2 domains through a region near their Ca2+-binding sites to form a tetrahedral, X-like shape.

It is found in the cell membrane. The protein localises to the cytoplasm. Functionally, cadherins are calcium-dependent cell adhesion proteins. They preferentially interact with themselves in a homophilic manner in connecting cells; cadherins may thus contribute to the sorting of heterogeneous cell types. May act as a negative regulator of neural cell growth. This is Cadherin-13 (CDH13) from Bos taurus (Bovine).